Reading from the N-terminus, the 439-residue chain is Proline--tRNA ligase (439 aa).

It belongs to the class-II aminoacyl-tRNA synthetase family. ProS type 2 subfamily. Homodimer.

Its subcellular location is the cytoplasm. The enzyme catalyses tRNA(Pro) + L-proline + ATP = L-prolyl-tRNA(Pro) + AMP + diphosphate. Functionally, catalyzes the attachment of proline to tRNA(Pro) in a two-step reaction: proline is first activated by ATP to form Pro-AMP and then transferred to the acceptor end of tRNA(Pro). This chain is Proline--tRNA ligase, found in Parvibaculum lavamentivorans (strain DS-1 / DSM 13023 / NCIMB 13966).